We begin with the raw amino-acid sequence, 175 residues long: SsrA-binding protein (175 aa).

Belongs to the SmpB family.

Its subcellular location is the cytoplasm. Required for rescue of stalled ribosomes mediated by trans-translation. Binds to transfer-messenger RNA (tmRNA), required for stable association of tmRNA with ribosomes. tmRNA and SmpB together mimic tRNA shape, replacing the anticodon stem-loop with SmpB. tmRNA is encoded by the ssrA gene; the 2 termini fold to resemble tRNA(Ala) and it encodes a 'tag peptide', a short internal open reading frame. During trans-translation Ala-aminoacylated tmRNA acts like a tRNA, entering the A-site of stalled ribosomes, displacing the stalled mRNA. The ribosome then switches to translate the ORF on the tmRNA; the nascent peptide is terminated with the 'tag peptide' encoded by the tmRNA and targeted for degradation. The ribosome is freed to recommence translation, which seems to be the essential function of trans-translation. This Prochlorococcus marinus subsp. pastoris (strain CCMP1986 / NIES-2087 / MED4) protein is SsrA-binding protein.